Here is a 233-residue protein sequence, read N- to C-terminus: Adenosylcobinamide-GDP ribazoletransferase (233 aa).

Helical transmembrane passes span 24-44 (LWAFPLVALVSSALPTLVLYL), 46-66 (LPLSNVLAVLALYFTIGLLHL), 96-116 (IAGLFAVVMVLFLQVYSLQLV), 117-137 (PFYAIFLAELNSKLAMLLALA), 156-176 (SGQLLGGFIFYAILLVPVVVY), 184-204 (LLGLAFGGYAIKVALDNFGGI), and 209-229 (IGAIAEITRAGTLLVVAFAGA).

Belongs to the CobS family. Mg(2+) serves as cofactor.

The protein localises to the cell membrane. The catalysed reaction is alpha-ribazole + adenosylcob(III)inamide-GDP = adenosylcob(III)alamin + GMP + H(+). It carries out the reaction alpha-ribazole 5'-phosphate + adenosylcob(III)inamide-GDP = adenosylcob(III)alamin 5'-phosphate + GMP + H(+). The protein operates within cofactor biosynthesis; adenosylcobalamin biosynthesis; adenosylcobalamin from cob(II)yrinate a,c-diamide: step 7/7. Joins adenosylcobinamide-GDP and alpha-ribazole to generate adenosylcobalamin (Ado-cobalamin). Also synthesizes adenosylcobalamin 5'-phosphate from adenosylcobinamide-GDP and alpha-ribazole 5'-phosphate. This chain is Adenosylcobinamide-GDP ribazoletransferase, found in Thermococcus onnurineus (strain NA1).